The primary structure comprises 1663 residues: Cortactin-binding protein 2 (1663 aa).

Disordered regions lie at residues 1 to 23 (MATDGASCEPDLSRAPEDAAGAA), 203 to 222 (KKKTNELEEELSAEKRRSTE), 358 to 440 (RQAS…LHPG), 454 to 479 (GNANDPDQNGNTTQSPPSRDMSPTSR), and 498 to 616 (RFTS…PKPS). Positions 119–276 (KKMQERMSAQ…EQLKRGSDSK (158 aa)) form a coiled coil. Over residues 386–396 (PSTDSTPDPTS) the composition is skewed to low complexity. A compositionally biased stretch (polar residues) spans 411 to 422 (QTPGIAPQNSQA). Asymmetric dimethylarginine is present on arginine 498. The segment covering 583–597 (TVASPPSSLPQGNRV) has biased composition (polar residues). ANK repeat units follow at residues 709–739 (GRPTLLQQAAAQGNVTLLSMLLNEEGLDINY), 743–772 (DGHSALYSAAKNGHTDCVRLLLSAEAQINA), 776–805 (NGFTPLCAAAAQGHFECVELLIAYDANINH), 809–838 (GGQTPLYLACKNENKECIKLLLEAGTNRSV), 842–871 (DGWTPVHAAVDTGNVDSLKLLMYHRIPACG), and 912–942 (EGWTAAHIAASKGFKNCLEILCRHGGLEPER). Positions 1447–1477 (KKKGESGAWRKVNTSPRRKSGRFSLPTWNKP) are disordered. Serine 1524 carries the post-translational modification Phosphoserine. Disordered stretches follow at residues 1581 to 1602 (QKEVSPLSSHQTTECSNSKSKT) and 1618 to 1663 (SKVT…KHNK). The span at 1582 to 1599 (KEVSPLSSHQTTECSNSK) shows a compositional bias: polar residues. Over residues 1624 to 1638 (SQNTKRSSSSSNTRQ) the composition is skewed to low complexity. A compositionally biased stretch (basic and acidic residues) spans 1645–1663 (SKEENWNLHKNEHLDKHNK).

In terms of assembly, interacts with CTTN/cortactin SH3 domain. Interacts with STRN, STRN4/zinedin and MOB4/phocein; this interactions mediate the association with the STRIPAK core complex and may regulate dendritic spine distribution of the STRIPAK complex in hippocampal neurons. Activation of glutamate receptors weakens the interaction with STRN and STRN4.

It localises to the cytoplasm. Its subcellular location is the cell cortex. The protein resides in the cell projection. The protein localises to the dendritic spine. In terms of biological role, regulates the dendritic spine distribution of CTTN/cortactin in hippocampal neurons, and thus controls dendritic spinogenesis and dendritic spine maintenance. Associates with the striatin-interacting phosphatase and kinase (STRIPAK) core complex to regulate dendritic spine distribution of the STRIPAK complex in hippocampal neurons. This is Cortactin-binding protein 2 (CTTNBP2) from Papio anubis (Olive baboon).